Reading from the N-terminus, the 82-residue chain is MSQAGAQEAPIKKKRPPVKEEDLKGARGNLTKNQEIKSKTYQVMRECEQAGSTAPSVFSRARTGAETVFEKPKAGPAKSVFG.

The interval 1–34 (MSQAGAQEAPIKKKRPPVKEEDLKGARGNLTKNQ) is disordered. A Phosphoserine modification is found at S2. The short motif at 10–18 (PIKKKRPPV) is the Nuclear localization signal element.

Belongs to the MUSTN1 family.

It is found in the nucleus. The protein resides in the cytoplasm. It localises to the secreted. Its subcellular location is the extracellular space. In terms of biological role, required for chondrocyte development and proliferation. Plays a role in myoblast differentiation and fusion. Modulates skeletal muscle extracellular matrix composition. Plays a role in skeletal muscle function. Plays a role in glucose homeostasis. The polypeptide is Musculoskeletal embryonic nuclear protein 1 (MUSTN1) (Bos taurus (Bovine)).